The primary structure comprises 208 residues: Small ribosomal subunit protein uS4 (208 aa).

The S4 RNA-binding domain occupies 97–158 (TRLDNVIYRM…RAQKYLCVQE (62 aa)).

This sequence belongs to the universal ribosomal protein uS4 family. As to quaternary structure, part of the 30S ribosomal subunit. Contacts protein S5. The interaction surface between S4 and S5 is involved in control of translational fidelity.

Functionally, one of the primary rRNA binding proteins, it binds directly to 16S rRNA where it nucleates assembly of the body of the 30S subunit. In terms of biological role, with S5 and S12 plays an important role in translational accuracy. The chain is Small ribosomal subunit protein uS4 from Xylella fastidiosa (strain M23).